Here is a 420-residue protein sequence, read N- to C-terminus: Tyrosine--tRNA ligase 2 (420 aa).

Y34 provides a ligand contact to L-tyrosine. Residues 39 to 48 (PTGDSMHIGH) carry the 'HIGH' region motif. The L-tyrosine site is built by Y168 and Q172. A 'KMSKS' region motif is present at residues 230–234 (KFGKS). Residue K233 participates in ATP binding. Residues 352–418 (KNIVEWLVDL…GKKNYSLVKL (67 aa)) form the S4 RNA-binding domain.

It belongs to the class-I aminoacyl-tRNA synthetase family. TyrS type 1 subfamily. In terms of assembly, homodimer.

It localises to the cytoplasm. It catalyses the reaction tRNA(Tyr) + L-tyrosine + ATP = L-tyrosyl-tRNA(Tyr) + AMP + diphosphate + H(+). Its function is as follows. Catalyzes the attachment of tyrosine to tRNA(Tyr) in a two-step reaction: tyrosine is first activated by ATP to form Tyr-AMP and then transferred to the acceptor end of tRNA(Tyr). The sequence is that of Tyrosine--tRNA ligase 2 from Bacillus cereus (strain ATCC 14579 / DSM 31 / CCUG 7414 / JCM 2152 / NBRC 15305 / NCIMB 9373 / NCTC 2599 / NRRL B-3711).